The primary structure comprises 370 residues: 3-isopropylmalate dehydrogenase (370 aa).

Position 77 to 90 (77 to 90) interacts with NAD(+); it reads GPKWDAVPYEVRPE. Substrate-binding residues include R97, R107, R135, and D226. Mg(2+) is bound by residues D226, D250, and D254. 290–302 lines the NAD(+) pocket; it reads GSAPDIAGTGVAN.

This sequence belongs to the isocitrate and isopropylmalate dehydrogenases family. LeuB type 1 subfamily. In terms of assembly, homodimer. Mg(2+) is required as a cofactor. Requires Mn(2+) as cofactor.

It is found in the cytoplasm. The enzyme catalyses (2R,3S)-3-isopropylmalate + NAD(+) = 4-methyl-2-oxopentanoate + CO2 + NADH. The protein operates within amino-acid biosynthesis; L-leucine biosynthesis; L-leucine from 3-methyl-2-oxobutanoate: step 3/4. Catalyzes the oxidation of 3-carboxy-2-hydroxy-4-methylpentanoate (3-isopropylmalate) to 3-carboxy-4-methyl-2-oxopentanoate. The product decarboxylates to 4-methyl-2 oxopentanoate. The chain is 3-isopropylmalate dehydrogenase from Rhizobium meliloti (strain 1021) (Ensifer meliloti).